Consider the following 63-residue polypeptide: Phylloseptin-Az1 (63 aa).

A signal peptide spans 1-19; that stretch reads LKKSLFLVVFLGLATLSIC. Residues 20-41 constitute a propeptide that is removed on maturation; it reads EEEKRETEEEEYNQGEDDKSEE. Position 62 is a phenylalanine amide (Phe62).

As to expression, expressed by the skin glands.

It localises to the secreted. Functionally, has antimicrobial activity. The polypeptide is Phylloseptin-Az1 (Pithecopus azureus (Orange-legged monkey tree frog)).